The primary structure comprises 77 residues: UPF0401 protein c0279 (77 aa).

The protein belongs to the UPF0401 family.

The chain is UPF0401 protein c0279 from Escherichia coli O6:H1 (strain CFT073 / ATCC 700928 / UPEC).